Here is a 373-residue protein sequence, read N- to C-terminus: Queuine tRNA-ribosyltransferase (373 aa).

The Proton acceptor role is filled by Asp-94. Substrate contacts are provided by residues 94-98, Asp-148, Gln-191, and Gly-218; that span reads DSGGF. The segment at 249-255 is RNA binding; that stretch reads GVGTPDY. Asp-268 functions as the Nucleophile in the catalytic mechanism. Residues 273-277 are RNA binding; important for wobble base 34 recognition; sequence TRIGR. Zn(2+)-binding residues include Cys-306, Cys-308, Cys-311, and His-337.

The protein belongs to the queuine tRNA-ribosyltransferase family. In terms of assembly, homodimer. Within each dimer, one monomer is responsible for RNA recognition and catalysis, while the other monomer binds to the replacement base PreQ1. Requires Zn(2+) as cofactor.

The enzyme catalyses 7-aminomethyl-7-carbaguanine + guanosine(34) in tRNA = 7-aminomethyl-7-carbaguanosine(34) in tRNA + guanine. It participates in tRNA modification; tRNA-queuosine biosynthesis. Catalyzes the base-exchange of a guanine (G) residue with the queuine precursor 7-aminomethyl-7-deazaguanine (PreQ1) at position 34 (anticodon wobble position) in tRNAs with GU(N) anticodons (tRNA-Asp, -Asn, -His and -Tyr). Catalysis occurs through a double-displacement mechanism. The nucleophile active site attacks the C1' of nucleotide 34 to detach the guanine base from the RNA, forming a covalent enzyme-RNA intermediate. The proton acceptor active site deprotonates the incoming PreQ1, allowing a nucleophilic attack on the C1' of the ribose to form the product. After dissociation, two additional enzymatic reactions on the tRNA convert PreQ1 to queuine (Q), resulting in the hypermodified nucleoside queuosine (7-(((4,5-cis-dihydroxy-2-cyclopenten-1-yl)amino)methyl)-7-deazaguanosine). The polypeptide is Queuine tRNA-ribosyltransferase (Ruminiclostridium cellulolyticum (strain ATCC 35319 / DSM 5812 / JCM 6584 / H10) (Clostridium cellulolyticum)).